We begin with the raw amino-acid sequence, 308 residues long: Mycothiol acetyltransferase (308 aa).

Residues 1–20 are disordered; sequence MTSDDTAQPSGARRIETRPD. 2 consecutive N-acetyltransferase domains span residues 15-152 and 165-308; these read IETR…RSLT and VTVR…RSET. E47 is a 1D-myo-inositol 2-(L-cysteinylamino)-2-deoxy-alpha-D-glucopyranoside binding site. 91 to 93 contributes to the acetyl-CoA binding site; the sequence is LVV. 1D-myo-inositol 2-(L-cysteinylamino)-2-deoxy-alpha-D-glucopyranoside is bound by residues E192, K231, and E240. Acetyl-CoA is bound by residues 244 to 246 and 251 to 257; these read VGV and QGGGLGK. Residue Y278 coordinates 1D-myo-inositol 2-(L-cysteinylamino)-2-deoxy-alpha-D-glucopyranoside.

It belongs to the acetyltransferase family. MshD subfamily. Monomer.

The catalysed reaction is 1D-myo-inositol 2-(L-cysteinylamino)-2-deoxy-alpha-D-glucopyranoside + acetyl-CoA = mycothiol + CoA + H(+). In terms of biological role, catalyzes the transfer of acetyl from acetyl-CoA to desacetylmycothiol (Cys-GlcN-Ins) to form mycothiol. The polypeptide is Mycothiol acetyltransferase (Streptomyces scabiei (strain 87.22)).